Here is a 187-residue protein sequence, read N- to C-terminus: dTTP/UTP pyrophosphatase (187 aa).

The active-site Proton acceptor is Asp64.

This sequence belongs to the Maf family. YhdE subfamily. A divalent metal cation is required as a cofactor.

It localises to the cytoplasm. The enzyme catalyses dTTP + H2O = dTMP + diphosphate + H(+). It carries out the reaction UTP + H2O = UMP + diphosphate + H(+). Functionally, nucleoside triphosphate pyrophosphatase that hydrolyzes dTTP and UTP. May have a dual role in cell division arrest and in preventing the incorporation of modified nucleotides into cellular nucleic acids. This chain is dTTP/UTP pyrophosphatase, found in Leptospira interrogans serogroup Icterohaemorrhagiae serovar Lai (strain 56601).